The primary structure comprises 239 residues: Probable transcriptional regulatory protein BAA_0622 (239 aa).

It belongs to the TACO1 family. YeeN subfamily.

The protein resides in the cytoplasm. In Bacillus anthracis (strain A0248), this protein is Probable transcriptional regulatory protein BAA_0622.